The chain runs to 391 residues: MASGNPYTLKWGIMATGGIAETFCKDLLCNPAIRGADDVRHEIVAVASSSSSKRAEEFLQRIDGAFDAKTYGSYPELVADPNVDIVYVATPHSHHFQNTMLALEAGKNVLCEKAFTVTAAQARKLVETAKAKKLFLMEAVWTRYFPLSIKIRELIAAGEIGTVFRTIADLSINANSEQGQALKFADSHRMVNPDLAGGATLDLGVYPLTWVFQTLYHLQPEEDKEAPTVVASSNKYTTGADENTAIICSFPRHNSIGIASTTMRADTDPEKDTIPAVRIQGSKGEIQVFFPTYRPLKYKVVKTNGEAQTVDCPIPGDPARKGSGHGMFWEADECARCLRDGKLESATLPWKESIVIMETMEEALRQGGVTYPELITTDVYDPKSPLNTGNQ.

Belongs to the Gfo/Idh/MocA family.

It catalyses the reaction D-xylose + NADP(+) = D-xylono-1,5-lactone + NADPH + H(+). Functionally, NADP-dependent D-xylose dehydrogenase catalyzing the oxydation of D-xylose into D-xylonolactone. Also displays some, albeit lower activity with D-glucose, D-galactose and L-arabinose as substrate. Probably not involved in D-xylose degradation, as it has been shown that H.jecorina assimilates D-xylose via D-xylose reductase and xylitol dehydrogenase, and it is unable to grow on D-xylonic acid as sole carbon source. May play a role in the regeneration of NADP(+) in the presence of D-xylose. The polypeptide is D-xylose 1-dehydrogenase (NADP(+)) (Hypocrea jecorina (strain ATCC 56765 / BCRC 32924 / NRRL 11460 / Rut C-30) (Trichoderma reesei)).